A 342-amino-acid chain; its full sequence is Foldase protein PrsA (342 aa).

The first 22 residues, 1–22, serve as a signal peptide directing secretion; that stretch reads MVSVKKIVASALVGVLMFSAVG. Cys-23 carries the N-palmitoyl cysteine lipid modification. Cys-23 carries the S-diacylglycerol cysteine lipid modification. A PpiC domain is found at 189–284; the sequence is DSGVLTKHLL…FGYHIIQAGA (96 aa).

This sequence belongs to the PrsA family.

The protein resides in the cell membrane. The catalysed reaction is [protein]-peptidylproline (omega=180) = [protein]-peptidylproline (omega=0). Plays a major role in protein secretion by helping the post-translocational extracellular folding of several secreted proteins. The chain is Foldase protein PrsA from Clostridium perfringens (strain ATCC 13124 / DSM 756 / JCM 1290 / NCIMB 6125 / NCTC 8237 / Type A).